The following is a 234-amino-acid chain: Adenosine 5'-phosphosulfate reductase (234 aa).

Positions 120, 121, 203, and 206 each coordinate [4Fe-4S] cluster. Residue cysteine 229 is the Nucleophile; cysteine thiosulfonate intermediate of the active site.

It belongs to the PAPS reductase family. CysH subfamily. Requires [4Fe-4S] cluster as cofactor.

Its subcellular location is the cytoplasm. The catalysed reaction is [thioredoxin]-disulfide + sulfite + AMP + 2 H(+) = adenosine 5'-phosphosulfate + [thioredoxin]-dithiol. It functions in the pathway sulfur metabolism; hydrogen sulfide biosynthesis; sulfite from sulfate. Its function is as follows. Catalyzes the formation of sulfite from adenosine 5'-phosphosulfate (APS) using thioredoxin as an electron donor. The sequence is that of Adenosine 5'-phosphosulfate reductase from Bacillus thuringiensis subsp. konkukian (strain 97-27).